A 236-amino-acid chain; its full sequence is Small ribosomal subunit protein uS5 (236 aa).

A compositionally biased stretch (basic and acidic residues) spans 1–10 (MTENNEKDIQ). Residues 1–64 (MTENNEKDIQ…GRDGGREAEK (64 aa)) are disordered. The segment covering 11–27 (VTEAVAAPATETAAPAT) has biased composition (low complexity). Over residues 28–64 (TDDRRGGARRGERGDRGQGRGDRGGRGGRDGGREAEK) the composition is skewed to basic and acidic residues. The 64-residue stretch at 67 to 130 (FVERVVTINR…EEAKKSFFRV (64 aa)) folds into the S5 DRBM domain.

This sequence belongs to the universal ribosomal protein uS5 family. Part of the 30S ribosomal subunit. Contacts proteins S4 and S8.

With S4 and S12 plays an important role in translational accuracy. Its function is as follows. Located at the back of the 30S subunit body where it stabilizes the conformation of the head with respect to the body. The polypeptide is Small ribosomal subunit protein uS5 (Arthrobacter sp. (strain FB24)).